The following is a 252-amino-acid chain: Ditrans,polycis-undecaprenyl-diphosphate synthase ((2E,6E)-farnesyl-diphosphate specific) (252 aa).

Residue Asp25 is part of the active site. Asp25 lines the Mg(2+) pocket. Substrate contacts are provided by residues 26-29, Trp30, Arg38, His42, and 70-72; these read GNGR and SSE. Catalysis depends on Asn73, which acts as the Proton acceptor. Positions 74, 76, and 193 each coordinate substrate. His198 contributes to the Mg(2+) binding site. 199-201 is a substrate binding site; sequence RIS. Glu212 contributes to the Mg(2+) binding site.

It belongs to the UPP synthase family. Homodimer. The cofactor is Mg(2+).

It carries out the reaction 8 isopentenyl diphosphate + (2E,6E)-farnesyl diphosphate = di-trans,octa-cis-undecaprenyl diphosphate + 8 diphosphate. Its function is as follows. Catalyzes the sequential condensation of isopentenyl diphosphate (IPP) with (2E,6E)-farnesyl diphosphate (E,E-FPP) to yield (2Z,6Z,10Z,14Z,18Z,22Z,26Z,30Z,34E,38E)-undecaprenyl diphosphate (di-trans,octa-cis-UPP). UPP is the precursor of glycosyl carrier lipid in the biosynthesis of bacterial cell wall polysaccharide components such as peptidoglycan and lipopolysaccharide. This is Ditrans,polycis-undecaprenyl-diphosphate synthase ((2E,6E)-farnesyl-diphosphate specific) from Salmonella typhi.